The chain runs to 485 residues: Chitin synthase regulator 2 (485 aa).

Sel1-like repeat units follow at residues 164–202 (PDAQ…KHGH), 203–238 (PDAC…VGLH), 239–275 (PGAM…EHAT), 279–316 (PHAL…ELGY), 317–353 (APSA…QQDH), 354–391 (KDAC…ELGL), and 392–427 (AKAQ…EGGD). Positions 460–485 (AANLAQRSGSGSGASGKDGKDGCLIM) are disordered. The span at 476–485 (KDGKDGCLIM) shows a compositional bias: basic and acidic residues. C482 carries the post-translational modification Cysteine methyl ester. A lipid anchor (S-farnesyl cysteine) is attached at C482. The propeptide at 483–485 (LIM) is removed in mature form.

Belongs to the SKT5 family.

It is found in the cell membrane. Its function is as follows. Activator of the chitin synthase CHS3 which polymerizes chitin, a structural polymer of the fungal cell wall. Chitin produced by CHS3 is deacetylated to chitosan, which helps to maintain cell wall integrity, anchor melanin, and offers an advantage during infection, as chitosan is less readily detected by host immunosurveillance. The chain is Chitin synthase regulator 2 from Cryptococcus neoformans var. grubii serotype A (strain H99 / ATCC 208821 / CBS 10515 / FGSC 9487) (Filobasidiella neoformans var. grubii).